A 500-amino-acid chain; its full sequence is Protein nucleotidyltransferase YdiU (500 aa).

8 residues coordinate ATP: glycine 96, glycine 98, arginine 99, lysine 119, aspartate 131, glycine 132, arginine 182, and arginine 189. The active-site Proton acceptor is aspartate 258. The Mg(2+) site is built by asparagine 259 and aspartate 268. Residue aspartate 268 coordinates ATP.

This sequence belongs to the SELO family. The cofactor is Mg(2+). Mn(2+) is required as a cofactor.

It carries out the reaction L-seryl-[protein] + ATP = 3-O-(5'-adenylyl)-L-seryl-[protein] + diphosphate. The catalysed reaction is L-threonyl-[protein] + ATP = 3-O-(5'-adenylyl)-L-threonyl-[protein] + diphosphate. The enzyme catalyses L-tyrosyl-[protein] + ATP = O-(5'-adenylyl)-L-tyrosyl-[protein] + diphosphate. It catalyses the reaction L-histidyl-[protein] + UTP = N(tele)-(5'-uridylyl)-L-histidyl-[protein] + diphosphate. It carries out the reaction L-seryl-[protein] + UTP = O-(5'-uridylyl)-L-seryl-[protein] + diphosphate. The catalysed reaction is L-tyrosyl-[protein] + UTP = O-(5'-uridylyl)-L-tyrosyl-[protein] + diphosphate. In terms of biological role, nucleotidyltransferase involved in the post-translational modification of proteins. It can catalyze the addition of adenosine monophosphate (AMP) or uridine monophosphate (UMP) to a protein, resulting in modifications known as AMPylation and UMPylation. This Rhizobium etli (strain CIAT 652) protein is Protein nucleotidyltransferase YdiU.